The sequence spans 192 residues: A-type ATP synthase subunit E (192 aa).

This sequence belongs to the V-ATPase E subunit family. In terms of assembly, has multiple subunits with at least A(3), B(3), C, D, E, F, H, I and proteolipid K(x).

It localises to the cell membrane. In terms of biological role, component of the A-type ATP synthase that produces ATP from ADP in the presence of a proton gradient across the membrane. The polypeptide is A-type ATP synthase subunit E (Metallosphaera sedula (strain ATCC 51363 / DSM 5348 / JCM 9185 / NBRC 15509 / TH2)).